Reading from the N-terminus, the 95-residue chain is Putative protein RDUR (95 aa).

The span at 1–12 (MNNSFNKEDRMS) shows a compositional bias: basic and acidic residues. Residues 1-20 (MNNSFNKEDRMSSDTMVGSC) form a disordered region.

Its function is as follows. Could play a role in innate immunity against viruses. This is Putative protein RDUR from Homo sapiens (Human).